The sequence spans 161 residues: Protein translocase subunit SecE (161 aa).

The segment covering 1–12 (MSDEGDVADEAV) has biased composition (acidic residues). The interval 1-80 (MSDEGDVADE…GVAKDDSTTK (80 aa)) is disordered. A helical transmembrane segment spans residues 133 to 153 (VVLAFLAFMVALVAGADLGLT).

This sequence belongs to the SecE/SEC61-gamma family. In terms of assembly, component of the Sec protein translocase complex. Heterotrimer consisting of SecY, SecE and SecG subunits. The heterotrimers can form oligomers, although 1 heterotrimer is thought to be able to translocate proteins. Interacts with the ribosome. Interacts with SecDF, and other proteins may be involved. Interacts with SecA.

Its subcellular location is the cell membrane. Functionally, essential subunit of the Sec protein translocation channel SecYEG. Clamps together the 2 halves of SecY. May contact the channel plug during translocation. The chain is Protein translocase subunit SecE from Mycobacterium bovis (strain ATCC BAA-935 / AF2122/97).